We begin with the raw amino-acid sequence, 269 residues long: Subtilisin BL (269 aa).

Q2 provides a ligand contact to Ca(2+). The Peptidase S8 domain occupies 5-268 (PWGISRVQAP…SGLVNAEAAT (264 aa)). D32 (charge relay system) is an active-site residue. Residue D40 participates in Ca(2+) binding. H62 acts as the Charge relay system in catalysis. Ca(2+)-binding residues include L73, N75, I77, V79, A163, Y165, and A168. Catalysis depends on S215, which acts as the Charge relay system.

This sequence belongs to the peptidase S8 family. Requires Ca(2+) as cofactor.

It is found in the secreted. It catalyses the reaction Hydrolysis of proteins with broad specificity for peptide bonds, and a preference for a large uncharged residue in P1. Hydrolyzes peptide amides.. Functionally, subtilisin is an extracellular alkaline serine protease, it catalyzes the hydrolysis of proteins and peptide amides. The chain is Subtilisin BL from Lederbergia lenta (Bacillus lentus).